A 345-amino-acid chain; its full sequence is S-adenosylmethionine:tRNA ribosyltransferase-isomerase (345 aa).

This sequence belongs to the QueA family. In terms of assembly, monomer.

The protein localises to the cytoplasm. It catalyses the reaction 7-aminomethyl-7-carbaguanosine(34) in tRNA + S-adenosyl-L-methionine = epoxyqueuosine(34) in tRNA + adenine + L-methionine + 2 H(+). It participates in tRNA modification; tRNA-queuosine biosynthesis. In terms of biological role, transfers and isomerizes the ribose moiety from AdoMet to the 7-aminomethyl group of 7-deazaguanine (preQ1-tRNA) to give epoxyqueuosine (oQ-tRNA). This chain is S-adenosylmethionine:tRNA ribosyltransferase-isomerase, found in Anaeromyxobacter dehalogenans (strain 2CP-1 / ATCC BAA-258).